A 274-amino-acid polypeptide reads, in one-letter code: MPFRSNNPITRDELLSRFFPQFHPVTTFNSGLSGGSFLIEHQGQRFVVRQPHDPDAPQSAFLRQYRALSQLPACIAPKPHLYLRDWMVVDYLPGEVKTYLPDTNELAGLLYYLHQQPRFGWRITLLPLLELYWQQSDPARRTVGWLRMLKRLRKAREPRPLRLSPLHMDVHAGNLVHSVSGLKLIDWEYAGDGDIALELAAVWVENTEQHRQLVNDYATRAKIYPAQLWRQVRRWFPWLLMLKAGWFEYRWRQTGDQQFIRLADDTWRQLLIKQ.

Belongs to the thiamine kinase family.

It carries out the reaction thiamine + ATP = thiamine phosphate + ADP + H(+). Its pathway is cofactor biosynthesis; thiamine diphosphate biosynthesis; thiamine phosphate from thiamine: step 1/1. Functionally, catalyzes the ATP-dependent phosphorylation of thiamine to thiamine phosphate. Is involved in thiamine salvage. The polypeptide is Thiamine kinase (Shigella dysenteriae serotype 1 (strain Sd197)).